Here is a 104-residue protein sequence, read N- to C-terminus: Ig lambda-3 chain C region (104 aa).

One can recognise an Ig-like domain in the interval 6-99 (PTLTMFPPSP…EGDTVEKSLS (94 aa)). C27 and C85 are oxidised to a cystine.

The chain is Ig lambda-3 chain C region (Iglc3) from Mus musculus (Mouse).